The primary structure comprises 264 residues: Phosphonoacetaldehyde hydrolase (264 aa).

Asp-9 serves as the catalytic Nucleophile. Positions 9 and 11 each coordinate Mg(2+). Lys-50 acts as the Schiff-base intermediate with substrate in catalysis. Asp-183 provides a ligand contact to Mg(2+).

It belongs to the HAD-like hydrolase superfamily. PhnX family. In terms of assembly, homodimer. Mg(2+) serves as cofactor.

The catalysed reaction is phosphonoacetaldehyde + H2O = acetaldehyde + phosphate + H(+). Its function is as follows. Involved in phosphonate degradation. This is Phosphonoacetaldehyde hydrolase from Bacillus cereus (strain B4264).